Reading from the N-terminus, the 1183-residue chain is Formin-like protein (1183 aa).

2 disordered regions span residues 1-44 (MGAV…SISS) and 63-82 (QHVR…PTTD). Basic residues predominate over residues 23–36 (PHSHAHHHSMRNGH). The span at 63–79 (QHVRQPSLRSRSQQPMP) shows a compositional bias: polar residues. The region spanning 76–559 (QPMPTTDELD…HNEQELKKRD (484 aa)) is the GBD/FH3 domain. Serine 225 carries the phosphoserine modification. The segment covering 572-584 (LSRSLPRSASSGD) has biased composition (polar residues). Residues 572–681 (LSRSLPRSAS…PPVAGFMPAP (110 aa)) form a disordered region. Composition is skewed to pro residues over residues 605 to 614 (LPPPPPPMPA) and 622 to 640 (APPP…PPGF). Residues 641 to 654 (SPLGSPSGSLASTA) show a composition bias toward low complexity. Residues 687 to 1088 (IKRKVPTKYK…AALAASKKEN (402 aa)) form the FH2 domain. In terms of domain architecture, DAD spans 1136-1169 (DEVYNGALEDILLGLKSEPYRRADAVRRSQRRRI).

Belongs to the formin homology family. Self-associates. Interacts (via GBD/FH3 domain) with Cdc42; the interaction is stronger with the GTP bound form of Cdc42.

Together with Cdc42, involved in establishment of planar cell polarity in the developing compound eye by contributing to ommatidial rotation. Together with DAAM and Cdc42, has a role in neuronal development of mushroom bodies. The polypeptide is Formin-like protein (Drosophila melanogaster (Fruit fly)).